The primary structure comprises 73 residues: Maltose-binding periplasmic protein (73 aa).

Residues 1-30 form the signal peptide; the sequence is MMTKTNLKMGARTLALSVLATLVLSASALA.

It belongs to the bacterial solute-binding protein 1 family.

Its subcellular location is the periplasm. Its function is as follows. Involved in the high-affinity maltose membrane transport system. Initial receptor for the active transport of and chemotaxis toward maltooligosaccharides. The protein is Maltose-binding periplasmic protein (malE) of Photorhabdus luminescens (Xenorhabdus luminescens).